Consider the following 762-residue polypeptide: Homeobox-leucine zipper protein MERISTEM L1 (762 aa).

The tract at residues 13 to 72 is disordered; that stretch reads MFDMTPKNSENDLGITGSHEEDFETKSGAEVTMENPLEEELQDPNQRPNKKKRYHRHTQR. Basic and acidic residues predominate over residues 30–39; sequence SHEEDFETKS. Positions 60–71 are enriched in basic residues; sequence PNKKKRYHRHTQ. A DNA-binding region (homeobox) is located at residues 62–121; that stretch reads KKKRYHRHTQRQIQELESFFKECPHPDDKQRKELSRELSLEPLQVKFWFQNKRTQMKAQH. A coiled-coil region spans residues 110–192; sequence FQNKRTQMKA…DRISAIAAKY (83 aa). In terms of domain architecture, START spans 253 to 484; the sequence is SEADKPMIVE…LDRQCERLAS (232 aa).

Belongs to the HD-ZIP homeobox family. Class IV subfamily. In terms of assembly, interacts with GAI/RGA2, RGA/RGA1/GRS, RGL2/SCL19 and PDF2. Interacts with AIL7/PLT7, ANT, BBM and AIL1.

It is found in the nucleus. Functionally, probable transcription factor involved in cell specification and pattern formation during embryogenesis. Binds to the L1 box DNA sequence 5'-TAAATG[CT]A-3'. Plays a role in maintaining the identity of L1 cells, possibly by interacting with their L1 box or other target-gene promoters; binds to the LIP1 gene promoter and stimulates its expression upon imbibition. Acts as a positive regulator of gibberellins (GAs)-regulated epidermal gene expression (e.g. LIP1, LIP2, LTP1, FDH and PDF1). Functionally redundant to PDF2. Seems to promote cell differentiation. The protein is Homeobox-leucine zipper protein MERISTEM L1 of Arabidopsis thaliana (Mouse-ear cress).